A 492-amino-acid polypeptide reads, in one-letter code: Aspartyl/glutamyl-tRNA(Asn/Gln) amidotransferase subunit B (492 aa).

Belongs to the GatB/GatE family. GatB subfamily. In terms of assembly, heterotrimer of A, B and C subunits.

It carries out the reaction L-glutamyl-tRNA(Gln) + L-glutamine + ATP + H2O = L-glutaminyl-tRNA(Gln) + L-glutamate + ADP + phosphate + H(+). The enzyme catalyses L-aspartyl-tRNA(Asn) + L-glutamine + ATP + H2O = L-asparaginyl-tRNA(Asn) + L-glutamate + ADP + phosphate + 2 H(+). In terms of biological role, allows the formation of correctly charged Asn-tRNA(Asn) or Gln-tRNA(Gln) through the transamidation of misacylated Asp-tRNA(Asn) or Glu-tRNA(Gln) in organisms which lack either or both of asparaginyl-tRNA or glutaminyl-tRNA synthetases. The reaction takes place in the presence of glutamine and ATP through an activated phospho-Asp-tRNA(Asn) or phospho-Glu-tRNA(Gln). This is Aspartyl/glutamyl-tRNA(Asn/Gln) amidotransferase subunit B from Bradyrhizobium sp. (strain BTAi1 / ATCC BAA-1182).